Reading from the N-terminus, the 1770-residue chain is U3 small nucleolar RNA-associated protein 10 (1770 aa).

Helical transmembrane passes span 499–519 (ILGL…FLSS) and 528–548 (LTFL…RLLA). The stretch at 1730–1768 (MVPIIAELLEDDNEEVESEVRGGLVRVMENVLGEPFDRY) is one HEAT repeat.

It belongs to the HEATR1/UTP10 family. As to quaternary structure, component of the ribosomal small subunit (SSU) processome.

The protein resides in the nucleus. It localises to the nucleolus. The protein localises to the membrane. Involved in nucleolar processing of pre-18S ribosomal RNA. Involved in ribosome biosynthesis. The chain is U3 small nucleolar RNA-associated protein 10 from Candida glabrata (strain ATCC 2001 / BCRC 20586 / JCM 3761 / NBRC 0622 / NRRL Y-65 / CBS 138) (Yeast).